A 389-amino-acid polypeptide reads, in one-letter code: Alkanesulfonate monooxygenase (389 aa).

The protein belongs to the SsuD family.

The enzyme catalyses an alkanesulfonate + FMNH2 + O2 = an aldehyde + FMN + sulfite + H2O + 2 H(+). Catalyzes the desulfonation of aliphatic sulfonates. This Rhizobium etli (strain CIAT 652) protein is Alkanesulfonate monooxygenase.